Reading from the N-terminus, the 424-residue chain is Cyclin-dependent kinase D-1 (424 aa).

The Protein kinase domain maps to 19–299 (YLKREVLGEG…AQQALEHRYF (281 aa)). ATP contacts are provided by residues 25–33 (LGEGTYGVV) and Lys48. Residue Thr29 is modified to Phosphothreonine. Tyr30 is modified (phosphotyrosine). Asp141 acts as the Proton acceptor in catalysis. Ser168 is subject to Phosphoserine. The residue at position 174 (Thr174) is a Phosphothreonine. Disordered stretches follow at residues 303–337 (PAPT…PVVL) and 359–424 (ADRT…GYTE). Residues 359 to 374 (ADRTEEHPSGARHMDD) show a composition bias toward basic and acidic residues.

It belongs to the protein kinase superfamily. CMGC Ser/Thr protein kinase family. CDC2/CDKX subfamily. Interacts with CYCH1-1. As to expression, expressed in actively dividing cells of roots, leaves and shoots. Expressed in the intercalary meristem and the elongation zone of internodes.

It is found in the nucleus. The enzyme catalyses L-seryl-[protein] + ATP = O-phospho-L-seryl-[protein] + ADP + H(+). The catalysed reaction is L-threonyl-[protein] + ATP = O-phospho-L-threonyl-[protein] + ADP + H(+). It catalyses the reaction [DNA-directed RNA polymerase] + ATP = phospho-[DNA-directed RNA polymerase] + ADP + H(+). Functionally, CDK-activating kinase that may control G1/S phase progression. May control the rate of cell differentiation to accomplish proper development of organs, or in response to a changing environment. Forms a complex with cyclin CYCH1-1 that phosphorylates CDKA-1 and the C-terminal domain (CTD) of the large subunit of RNA polymerase II. The protein is Cyclin-dependent kinase D-1 (CDKD-1) of Oryza sativa subsp. japonica (Rice).